The chain runs to 93 residues: Small ribosomal subunit protein uS15 (93 aa).

It belongs to the universal ribosomal protein uS15 family. Part of the 30S ribosomal subunit. Forms a bridge to the 50S subunit in the 70S ribosome, contacting the 23S rRNA.

Functionally, one of the primary rRNA binding proteins, it binds directly to 16S rRNA where it helps nucleate assembly of the platform of the 30S subunit by binding and bridging several RNA helices of the 16S rRNA. Forms an intersubunit bridge (bridge B4) with the 23S rRNA of the 50S subunit in the ribosome. This is Small ribosomal subunit protein uS15 from Anaplasma phagocytophilum (strain HZ).